We begin with the raw amino-acid sequence, 505 residues long: MAETDEADVQTKKSKTLIIRHLPRELSRDEKEDLLKYFGASSVRVLSEKGPLKHMAFATFSSETSASKALNRLHQLRILGRTLVVEFAKDQDSASILKDPPVSDRTAAAVAEKEKKEKQQPSVPLMDTSIAPSLGLKFQTNPTLKYLYPPPSSGILTNITHTLLSVPKFYVQVLHLMNKMNLPSPFRPVTAPPPMFEMPSGPLPPPFPPENPPLPEHDESGSEEESEYESEDEEERERMIRLMGLVNQPCKRPLRTKTSSKRKKPKLKDLLFIPKPDSHGPSGPVLQPADVFEQPHALGQKKIEFHISSEVSAILEGPGQNQKLPFADATEDTPDMEVSAQETTEGFGKIYPSAQVPRQEEEQEEDEDIPSEFISRRELERGRLSRDEIKKLSVFKKYEPGEPTCRLYVKNVAKHVEEKDLKFIYGRYIDISSEEERNMFDIVLMKEGRMKGQAFIGLPSERSAQKALKETNGYVLKDKPLVVQFARSAKPKQESADPKKGGRKH.

The region spanning 15 to 90 is the RRM 1 domain; sequence KTLIIRHLPR…RTLVVEFAKD (76 aa). Disordered stretches follow at residues 96–123, 193–236, 354–374, and 486–505; these read ILKDPPVSDRTAAAVAEKEKKEKQQPSV, PPMF…EEER, AQVPRQEEEQEEDEDIPSEFI, and ARSAKPKQESADPKKGGRKH. Residues 193–214 are compositionally biased toward pro residues; sequence PPMFEMPSGPLPPPFPPENPPL. Composition is skewed to acidic residues over residues 221–235 and 361–370; these read GSEEESEYESEDEEE and EEQEEDEDIP. The RRM 2 domain occupies 405-488; that stretch reads CRLYVKNVAK…KPLVVQFARS (84 aa). Over residues 491-505 the composition is skewed to basic and acidic residues; the sequence is PKQESADPKKGGRKH.

In terms of assembly, component of the U11/U12 snRNPs that are part of the U12-type spliceosome.

Its subcellular location is the nucleus. Functionally, participates in pre-mRNA U12-dependent splicing, performed by the minor spliceosome which removes U12-type introns. U12-type introns comprise less than 1% of all non-coding sequences. This is RNA-binding region-containing protein 3 from Danio rerio (Zebrafish).